The sequence spans 255 residues: 2-(S)-hydroxypropyl-CoM dehydrogenase 3 (255 aa).

Residues isoleucine 19, aspartate 38, aspartate 64–valine 65, and asparagine 91 contribute to the NAD(+) site. Residues serine 143 and tyrosine 156 each coordinate (S)-2-hydroxypropyl-coenzyme M. The Proton acceptor role is filled by tyrosine 156. Lysine 160 contributes to the NAD(+) binding site. Threonine 188 is a binding site for (S)-2-hydroxypropyl-coenzyme M. Valine 189–glycine 193 is a binding site for NAD(+). Position 215 (tyrosine 215) interacts with (S)-2-hydroxypropyl-coenzyme M.

This sequence belongs to the short-chain dehydrogenases/reductases (SDR) family. Homotetramer.

It carries out the reaction (S)-2-hydroxypropyl-coenzyme M + NAD(+) = 2-oxopropyl-coenzyme M + NADH + H(+). Its activity is regulated as follows. Not inhibited by 2-(2-methyl-2-hydroxypropylthio)ethanesulfonate (M-HPC), an achiral analog of both R-HPC and S-HPC. Functionally, involved in aliphatic epoxide carboxylation. Catalyzes the reversible oxidation of (2S)-2-hydroxypropyl-coenzyme M (S-HPC) to 2-oxopropyl-coenzyme M (2-KPC). The enzyme is highly specific for the S enantiomers. In vitro can also use the aliphatic ketone 2-butanone and the aliphatic alcohol 2-propanol, and shows an inherent stereoselectivity for 2-butanone reduction. The polypeptide is 2-(S)-hydroxypropyl-CoM dehydrogenase 3 (Xanthobacter autotrophicus (strain ATCC BAA-1158 / Py2)).